The primary structure comprises 413 residues: MASKKFAVKCGNFAVLVDLHVLPQGSNRDSSWFSEQKKEEVCLLLKETIDSRVKEYVGIYKQRKPSSAEFTRSSPLSLKGYGFQITAYFLKRGIHLHCIQNSQNTELRVFPERFVVCVSQLAFGHDIWANQNEKSTKKALHGVSDYFPECAESSPSPGTKLKRNALKEIVRRTKSKGTDVSKPQPSGDLVGRSSDSVITVVPWRRDASAILLSESVGQAQDDIRAAKSHQELPVQKLENVSQTQPGDTRSQQQLHPGEWLKTGLLSRSPAYNYESASPGPKQSLRAAKTQQKHRNCGSVEDCDHRRRVSLGNEGLVPEDADRERSTAVRVLPALELSDPGLLLKQDLAKAKAKEELHALENLSSRHLVTNNPGQAQQSDSAAITEQLATDQGGPSKKRKKLQSYNRGCSGKKN.

Glycyl lysine isopeptide (Lys-Gly) (interchain with G-Cter in SUMO2) cross-links involve residues Lys-61, Lys-79, Lys-167, Lys-176, and Lys-236. Disordered stretches follow at residues 172-193 and 228-300; these read RTKS…VGRS and SHQE…GSVE. The segment covering 238–254 has biased composition (polar residues); that stretch reads ENVSQTQPGDTRSQQQL. Residues Lys-288, Lys-344, and Lys-353 each participate in a glycyl lysine isopeptide (Lys-Gly) (interchain with G-Cter in SUMO2) cross-link. A disordered region spans residues 363–413; that stretch reads SSRHLVTNNPGQAQQSDSAAITEQLATDQGGPSKKRKKLQSYNRGCSGKKN. Over residues 364–389 the composition is skewed to polar residues; it reads SRHLVTNNPGQAQQSDSAAITEQLAT. Thr-389 carries the post-translational modification Phosphothreonine. Lys-396 is covalently cross-linked (Glycyl lysine isopeptide (Lys-Gly) (interchain with G-Cter in SUMO2)).

Belongs to the SLX4IP family. Interacts with SLX4/BTBD12; subunit of different structure-specific endonucleases.

In Mus musculus (Mouse), this protein is Protein SLX4IP (Slx4ip).